A 314-amino-acid polypeptide reads, in one-letter code: Inosine-uridine preferring nucleoside hydrolase (314 aa).

Ca(2+) is bound at residue Asp10. Asp14 is a substrate binding site. Residues Asp15 and Thr126 each contribute to the Ca(2+) site. Substrate contacts are provided by Asn160, Glu166, and Asn168. The active-site Proton donor is the His240. Asp241 serves as a coordination point for Ca(2+).

This sequence belongs to the IUNH family. Homotetramer. Ca(2+) serves as cofactor.

The catalysed reaction is inosine + H2O = hypoxanthine + D-ribose. The enzyme catalyses uridine + H2O = D-ribose + uracil. Its pathway is purine metabolism; purine nucleoside salvage. Its activity is regulated as follows. Is potently inhibited by immucillin A and immucillin ACAP, which are transition state inhibitors. Catalyzes the hydrolysis of the N-glycosidic bond of all of the commonly occurring purine and pyrimidine nucleosides into ribose and the associated base, but has a preference for inosine and uridine as substrates. Likely functions in purine salvage from the host, a fundamental pathway since protozoan parasites such as L.major are incapable of de novo purine biosynthesis. This chain is Inosine-uridine preferring nucleoside hydrolase (NSNH), found in Leishmania major.